The chain runs to 348 residues: Tetraacyldisaccharide 4'-kinase (348 aa).

65-72 (VAGGAGKT) contributes to the ATP binding site. Residues 89-117 (PGIVSRGHGSREREARPVSADSTAQSVGD) are disordered.

This sequence belongs to the LpxK family.

It catalyses the reaction a lipid A disaccharide + ATP = a lipid IVA + ADP + H(+). It functions in the pathway glycolipid biosynthesis; lipid IV(A) biosynthesis; lipid IV(A) from (3R)-3-hydroxytetradecanoyl-[acyl-carrier-protein] and UDP-N-acetyl-alpha-D-glucosamine: step 6/6. Transfers the gamma-phosphate of ATP to the 4'-position of a tetraacyldisaccharide 1-phosphate intermediate (termed DS-1-P) to form tetraacyldisaccharide 1,4'-bis-phosphate (lipid IVA). The protein is Tetraacyldisaccharide 4'-kinase of Leptothrix cholodnii (strain ATCC 51168 / LMG 8142 / SP-6) (Leptothrix discophora (strain SP-6)).